The chain runs to 588 residues: A-type ATP synthase subunit A 3 (588 aa).

Position 234–241 (234–241 (GPFGSGKT)) interacts with ATP.

The protein belongs to the ATPase alpha/beta chains family. Has multiple subunits with at least A(3), B(3), C, D, E, F, H, I and proteolipid K(x).

Its subcellular location is the cell membrane. The enzyme catalyses ATP + H2O + 4 H(+)(in) = ADP + phosphate + 5 H(+)(out). In terms of biological role, component of the A-type ATP synthase that produces ATP from ADP in the presence of a proton gradient across the membrane. The A chain is the catalytic subunit. In Methanospirillum hungatei JF-1 (strain ATCC 27890 / DSM 864 / NBRC 100397 / JF-1), this protein is A-type ATP synthase subunit A 3.